Reading from the N-terminus, the 351-residue chain is Molybdenum import ATP-binding protein ModC (351 aa).

Residues Met-1–Thr-229 enclose the ABC transporter domain. Gly-31–Ser-38 is a binding site for ATP. Residues His-290–Leu-351 form the Mop domain.

The protein belongs to the ABC transporter superfamily. Molybdate importer (TC 3.A.1.8) family. As to quaternary structure, the complex is composed of two ATP-binding proteins (ModC), two transmembrane proteins (ModB) and a solute-binding protein (ModA).

Its subcellular location is the cell inner membrane. The catalysed reaction is molybdate(out) + ATP + H2O = molybdate(in) + ADP + phosphate + H(+). In terms of biological role, part of the ABC transporter complex ModABC involved in molybdenum import. Responsible for energy coupling to the transport system. This is Molybdenum import ATP-binding protein ModC from Haemophilus ducreyi (strain 35000HP / ATCC 700724).